The primary structure comprises 438 residues: tRNA-dihydrouridine(16/17) synthase [NAD(P)(+)]-like (438 aa).

FMN-binding positions include 23-25 (PMV) and Gln-79. Cys-108 serves as the catalytic Proton donor. FMN is bound by residues Lys-147, His-175, 208–210 (NGN), and 232–233 (AE). The disordered stretch occupies residues 343–387 (GPKEGSKENSSGRSKRALEEEEGSMEGLSKNKLKKQLRNPHKTFD). Positions 373-383 (NKLKKQLRNPH) are enriched in basic residues.

Belongs to the Dus family. Dus1 subfamily. The cofactor is FMN.

It localises to the cytoplasm. The protein resides in the nucleus. It catalyses the reaction 5,6-dihydrouridine(16) in tRNA + NADP(+) = uridine(16) in tRNA + NADPH + H(+). The catalysed reaction is 5,6-dihydrouridine(16) in tRNA + NAD(+) = uridine(16) in tRNA + NADH + H(+). The enzyme catalyses 5,6-dihydrouridine(17) in tRNA + NAD(+) = uridine(17) in tRNA + NADH + H(+). It carries out the reaction 5,6-dihydrouridine(17) in tRNA + NADP(+) = uridine(17) in tRNA + NADPH + H(+). In terms of biological role, catalyzes the synthesis of dihydrouridine, a modified base found in the D-loop of most tRNAs. Specifically modifies U16 and U17 in cytoplasmic tRNAs. Affects the level of some mature tRNA and thereby the total cellular translation. This is tRNA-dihydrouridine(16/17) synthase [NAD(P)(+)]-like (Dus1l) from Rattus norvegicus (Rat).